The following is a 367-amino-acid chain: tRNA-specific 2-thiouridylase MnmA (367 aa).

ATP is bound by residues 11-18 and Leu-37; that span reads GLSGGVDS. Cys-99 functions as the Nucleophile in the catalytic mechanism. Cys-99 and Cys-195 are joined by a disulfide. ATP is bound at residue Gly-123. The interaction with tRNA stretch occupies residues 145 to 147; it reads KDQ. The Cysteine persulfide intermediate role is filled by Cys-195. The interaction with tRNA stretch occupies residues 304 to 305; the sequence is RY.

This sequence belongs to the MnmA/TRMU family.

It localises to the cytoplasm. The catalysed reaction is S-sulfanyl-L-cysteinyl-[protein] + uridine(34) in tRNA + AH2 + ATP = 2-thiouridine(34) in tRNA + L-cysteinyl-[protein] + A + AMP + diphosphate + H(+). Its function is as follows. Catalyzes the 2-thiolation of uridine at the wobble position (U34) of tRNA, leading to the formation of s(2)U34. The chain is tRNA-specific 2-thiouridylase MnmA from Chlorobium luteolum (strain DSM 273 / BCRC 81028 / 2530) (Pelodictyon luteolum).